A 255-amino-acid chain; its full sequence is 2,3-dehydroadipyl-CoA hydratase (255 aa).

The protein belongs to the enoyl-CoA hydratase/isomerase family.

It catalyses the reaction a (3S)-3-hydroxyacyl-CoA = a (2E)-enoyl-CoA + H2O. The catalysed reaction is a 4-saturated-(3S)-3-hydroxyacyl-CoA = a (3E)-enoyl-CoA + H2O. It functions in the pathway aromatic compound metabolism; phenylacetate degradation. Catalyzes the reversible conversion of enzymatically produced 2,3-dehydroadipyl-CoA into 3-hydroxyadipyl-CoA. The sequence is that of 2,3-dehydroadipyl-CoA hydratase (paaF) from Escherichia coli (strain K12).